The sequence spans 101 residues: MNKTEFIAFMTEHGHHHKHQGHKSFTKADAEKALNWVLESIISATKHQHSVNITGFGSFGIQSRKSREGRNPKTGAKMTIPAYKQPVFKAGSKLKEACNNK.

It belongs to the bacterial histone-like protein family. As to quaternary structure, homodimer.

In terms of biological role, histone-like DNA-binding protein which is capable of wrapping DNA to stabilize it, and thus to prevent its denaturation under extreme environmental conditions. This Rickettsia bellii (strain RML369-C) protein is DNA-binding protein HU (hup).